A 262-amino-acid chain; its full sequence is Probable cutinase 1 (262 aa).

The first 19 residues, 1–19, serve as a signal peptide directing secretion; it reads MAPLKSLLLGASLATLALS. Cystine bridges form between Cys-48/Cys-127 and Cys-74/Cys-88. Ser-138 acts as the Nucleophile in catalysis. Residues Cys-189 and Cys-196 are joined by a disulfide bond. Residue Asp-193 is part of the active site. His-206 serves as the catalytic Proton donor/acceptor. Residues 228-262 are disordered; sequence SSSTTSSSSDAASSSSAAGTSSSGLSGLSSFFGGL.

Belongs to the cutinase family.

The protein localises to the secreted. The enzyme catalyses cutin + H2O = cutin monomers.. Catalyzes the hydrolysis of complex carboxylic polyesters found in the cell wall of plants. Degrades cutin, a macromolecule that forms the structure of the plant cuticle. In Aspergillus niger (strain ATCC MYA-4892 / CBS 513.88 / FGSC A1513), this protein is Probable cutinase 1.